Reading from the N-terminus, the 833-residue chain is Probable serine/threonine-protein kinase DDB_G0277165 (833 aa).

The Protein kinase domain maps to 9–262 (FIIGKTLGQG…IKEIKEHPWF (254 aa)). Residues 15–23 (LGQGTTGKV) and Lys38 contribute to the ATP site. The active-site Proton acceptor is the Asp133. Residues 288-329 (QIDEDIFRSLMALGVGTIDEVKQQLVSNQKSATLIYYRLLEE) form the UBA domain. The span at 338-351 (NKYGYKPKETRRNS) shows a compositional bias: basic and acidic residues. Disordered stretches follow at residues 338 to 472 (NKYG…ISPS), 528 to 626 (QALQ…PIEI), and 764 to 799 (FINP…GGQN). Composition is skewed to low complexity over residues 365 to 432 (NNNN…NNNN) and 441 to 459 (SSSQ…QIPS). Residues 460–472 (NSTSQESMQISPS) are compositionally biased toward polar residues. The span at 528 to 589 (QALQQHHQQQ…SSTSTSPQLS (62 aa)) shows a compositional bias: low complexity. A compositionally biased stretch (polar residues) spans 600–625 (GSMTASTNPATSPTMSHRGKTSSPIE).

Belongs to the protein kinase superfamily. CAMK Ser/Thr protein kinase family.

It carries out the reaction L-seryl-[protein] + ATP = O-phospho-L-seryl-[protein] + ADP + H(+). It catalyses the reaction L-threonyl-[protein] + ATP = O-phospho-L-threonyl-[protein] + ADP + H(+). This is Probable serine/threonine-protein kinase DDB_G0277165 from Dictyostelium discoideum (Social amoeba).